The sequence spans 172 residues: MPGIVELPTLEELKVDEVKISSAVLKAAAHHYGAQCDKPNKEFMLCRWEEKDPRRCLEEGKLVNKCALDFFRQIKRHCAEPFTEYWTCIDYTGQQLFRHCRKQQAKFDECVLDKMGWVRPDLGELSKVTKVKTDRPLPENPYHSRPRPDPSPEIEGDLKPAIHGSRFYFWTK.

CHCH domains lie at 33–74 (GAQC…FRQI) and 75–118 (KRHC…MGWV). 4 consecutive short sequence motifs (cx9C motif) follow at residues 36–46 (CDKPNKEFMLC), 56–66 (CLEEGKLVNKC), 78–88 (CAEPFTEYWTC), and 100–110 (CRKQQAKFDEC). 4 disulfides stabilise this stretch: Cys36–Cys66, Cys46–Cys56, Cys78–Cys110, and Cys88–Cys100. Positions 133–159 (TDRPLPENPYHSRPRPDPSPEIEGDLK) are disordered. Residues 146 to 159 (PRPDPSPEIEGDLK) are compositionally biased toward basic and acidic residues.

The protein belongs to the complex I NDUFA8 subunit family. Complex I is composed of 45 different subunits.

It localises to the mitochondrion inner membrane. It is found in the mitochondrion intermembrane space. The protein localises to the mitochondrion. Its function is as follows. Accessory subunit of the mitochondrial membrane respiratory chain NADH dehydrogenase (Complex I), that is believed not to be involved in catalysis. Complex I functions in the transfer of electrons from NADH to the respiratory chain. The immediate electron acceptor for the enzyme is believed to be ubiquinone. The protein is NADH dehydrogenase [ubiquinone] 1 alpha subcomplex subunit 8 (NDUFA8) of Pongo abelii (Sumatran orangutan).